Here is a 368-residue protein sequence, read N- to C-terminus: S-adenosylmethionine:tRNA ribosyltransferase-isomerase (368 aa).

It belongs to the QueA family. As to quaternary structure, monomer.

Its subcellular location is the cytoplasm. It catalyses the reaction 7-aminomethyl-7-carbaguanosine(34) in tRNA + S-adenosyl-L-methionine = epoxyqueuosine(34) in tRNA + adenine + L-methionine + 2 H(+). Its pathway is tRNA modification; tRNA-queuosine biosynthesis. Its function is as follows. Transfers and isomerizes the ribose moiety from AdoMet to the 7-aminomethyl group of 7-deazaguanine (preQ1-tRNA) to give epoxyqueuosine (oQ-tRNA). This is S-adenosylmethionine:tRNA ribosyltransferase-isomerase from Methylorubrum extorquens (strain CM4 / NCIMB 13688) (Methylobacterium extorquens).